The chain runs to 349 residues: Phenylalanine--tRNA ligase alpha subunit (349 aa).

Mg(2+) is bound at residue Glu259.

The protein belongs to the class-II aminoacyl-tRNA synthetase family. Phe-tRNA synthetase alpha subunit type 1 subfamily. In terms of assembly, tetramer of two alpha and two beta subunits. It depends on Mg(2+) as a cofactor.

Its subcellular location is the cytoplasm. It catalyses the reaction tRNA(Phe) + L-phenylalanine + ATP = L-phenylalanyl-tRNA(Phe) + AMP + diphosphate + H(+). This Lactobacillus acidophilus (strain ATCC 700396 / NCK56 / N2 / NCFM) protein is Phenylalanine--tRNA ligase alpha subunit.